The chain runs to 149 residues: Probable flagellum biosynthesis repressor protein FlbT (149 aa).

Belongs to the FlbT family.

Its function is as follows. Has a post-transcriptional repressor function in flagellum biogenesis. Associates with the 5'-UTR of fljK mRNA and promotes its degradation. The protein is Probable flagellum biosynthesis repressor protein FlbT of Agrobacterium fabrum (strain C58 / ATCC 33970) (Agrobacterium tumefaciens (strain C58)).